A 247-amino-acid chain; its full sequence is Malonyl-[acyl-carrier protein] O-methyltransferase (247 aa).

The protein belongs to the methyltransferase superfamily.

The enzyme catalyses malonyl-[ACP] + S-adenosyl-L-methionine = malonyl-[ACP] methyl ester + S-adenosyl-L-homocysteine. Its pathway is cofactor biosynthesis; biotin biosynthesis. Its function is as follows. Converts the free carboxyl group of a malonyl-thioester to its methyl ester by transfer of a methyl group from S-adenosyl-L-methionine (SAM). It allows to synthesize pimeloyl-ACP via the fatty acid synthetic pathway. The protein is Malonyl-[acyl-carrier protein] O-methyltransferase of Buchnera aphidicola subsp. Baizongia pistaciae (strain Bp).